Consider the following 40-residue polypeptide: Sulfur globule protein TR0 (40 aa).

The protein to C.vinosum CV1 and CV2. As to quaternary structure, the protein envelope of the sulfur globules is composed of the three different proteins TR0, TR1 and TR2.

Its function is as follows. Structural protein of the sulfur globules, which are intracellular globules that serve for sulfur storage in purple sulfur bacteria. The polypeptide is Sulfur globule protein TR0 (Thiocapsa roseopersicina).